Consider the following 490-residue polypeptide: Protein nucleotidyltransferase YdiU (490 aa).

Residues glycine 94, glycine 96, arginine 97, lysine 117, aspartate 129, glycine 130, arginine 180, and arginine 187 each coordinate ATP. The Proton acceptor role is filled by aspartate 256. Residues asparagine 257 and aspartate 266 each contribute to the Mg(2+) site. ATP is bound at residue aspartate 266.

It belongs to the SELO family. Mg(2+) is required as a cofactor. Mn(2+) serves as cofactor.

It catalyses the reaction L-seryl-[protein] + ATP = 3-O-(5'-adenylyl)-L-seryl-[protein] + diphosphate. The enzyme catalyses L-threonyl-[protein] + ATP = 3-O-(5'-adenylyl)-L-threonyl-[protein] + diphosphate. The catalysed reaction is L-tyrosyl-[protein] + ATP = O-(5'-adenylyl)-L-tyrosyl-[protein] + diphosphate. It carries out the reaction L-histidyl-[protein] + UTP = N(tele)-(5'-uridylyl)-L-histidyl-[protein] + diphosphate. It catalyses the reaction L-seryl-[protein] + UTP = O-(5'-uridylyl)-L-seryl-[protein] + diphosphate. The enzyme catalyses L-tyrosyl-[protein] + UTP = O-(5'-uridylyl)-L-tyrosyl-[protein] + diphosphate. In terms of biological role, nucleotidyltransferase involved in the post-translational modification of proteins. It can catalyze the addition of adenosine monophosphate (AMP) or uridine monophosphate (UMP) to a protein, resulting in modifications known as AMPylation and UMPylation. In Clostridium perfringens (strain ATCC 13124 / DSM 756 / JCM 1290 / NCIMB 6125 / NCTC 8237 / Type A), this protein is Protein nucleotidyltransferase YdiU.